An 805-amino-acid chain; its full sequence is Leucine--tRNA ligase (805 aa).

Residues 41-52 (PYPSGAGLHVGH) carry the 'HIGH' region motif. Positions 577 to 581 (KMSKS) match the 'KMSKS' region motif. Residue K580 participates in ATP binding.

The protein belongs to the class-I aminoacyl-tRNA synthetase family.

It is found in the cytoplasm. The catalysed reaction is tRNA(Leu) + L-leucine + ATP = L-leucyl-tRNA(Leu) + AMP + diphosphate. The polypeptide is Leucine--tRNA ligase (Staphylococcus aureus (strain JH1)).